Here is a 318-residue protein sequence, read N- to C-terminus: Methionyl-tRNA formyltransferase (318 aa).

115–118 (SLLP) contacts (6S)-5,6,7,8-tetrahydrofolate.

The protein belongs to the Fmt family.

The enzyme catalyses L-methionyl-tRNA(fMet) + (6R)-10-formyltetrahydrofolate = N-formyl-L-methionyl-tRNA(fMet) + (6S)-5,6,7,8-tetrahydrofolate + H(+). Functionally, attaches a formyl group to the free amino group of methionyl-tRNA(fMet). The formyl group appears to play a dual role in the initiator identity of N-formylmethionyl-tRNA by promoting its recognition by IF2 and preventing the misappropriation of this tRNA by the elongation apparatus. The sequence is that of Methionyl-tRNA formyltransferase from Deinococcus radiodurans (strain ATCC 13939 / DSM 20539 / JCM 16871 / CCUG 27074 / LMG 4051 / NBRC 15346 / NCIMB 9279 / VKM B-1422 / R1).